A 289-amino-acid chain; its full sequence is MGASLNEIKTKIASTKKTSQITGAMQMVSAAKLQKAESHAKAFQTYAEKVRKITTDLVSSDNEPAKNPMMIKREVKKTGYLVITSDRGLVGGYNSNILKSVISNIRKRHTNESEYTILALGGTGADFFKARNVKVSYVLRGLSDQPTFEEVRAIVTEAVEEYQAEEFDELYVCYNHHVNSLVSEARMEKMLPISFDEKGDEKASLVTFELEPDRETILNQLLPQYAESMIYGSIVDAKTAEHAAGMTAMRTATDNAHSVINDLTIQYNRARQASITQEITEIVAGASAL.

It belongs to the ATPase gamma chain family. In terms of assembly, F-type ATPases have 2 components, CF(1) - the catalytic core - and CF(0) - the membrane proton channel. CF(1) has five subunits: alpha(3), beta(3), gamma(1), delta(1), epsilon(1). CF(0) has three main subunits: a, b and c.

It is found in the cell membrane. In terms of biological role, produces ATP from ADP in the presence of a proton gradient across the membrane. The gamma chain is believed to be important in regulating ATPase activity and the flow of protons through the CF(0) complex. This is ATP synthase gamma chain from Lactococcus lactis subsp. cremoris (strain SK11).